A 318-amino-acid chain; its full sequence is Endochitinase 1 (318 aa).

An N-terminal signal peptide occupies residues 1–18 (EFTTLFLLFSVLLLSASA). The region spanning 19–60 (EQCGSQAGGALCASGLCCSKFGWCGDTNDYCGPGNCQSQCPG) is the Chitin-binding type-1 domain. Cystine bridges form between cysteine 21/cysteine 36, cysteine 30/cysteine 42, cysteine 35/cysteine 49, cysteine 54/cysteine 58, cysteine 89/cysteine 152, cysteine 164/cysteine 172, and cysteine 271/cysteine 303. The active-site Proton donor is the glutamate 134. A propeptide spans 312–318 (GLLVDTM) (removed in mature form, vacuolar targeting).

The protein belongs to the glycosyl hydrolase 19 family. Chitinase class I subfamily.

The protein localises to the vacuole. The catalysed reaction is Random endo-hydrolysis of N-acetyl-beta-D-glucosaminide (1-&gt;4)-beta-linkages in chitin and chitodextrins.. Its function is as follows. Defense against chitin-containing fungal pathogens. In Solanum tuberosum (Potato), this protein is Endochitinase 1 (CHTB1).